Here is a 130-residue protein sequence, read N- to C-terminus: Small ribosomal subunit protein uS11 (130 aa).

The segment at 109–130 (EDVTPIPHDGTGRPGGKRGRRV) is disordered.

It belongs to the universal ribosomal protein uS11 family. As to quaternary structure, part of the 30S ribosomal subunit.

Functionally, located on the platform of the 30S subunit. The chain is Small ribosomal subunit protein uS11 from Methanosphaera stadtmanae (strain ATCC 43021 / DSM 3091 / JCM 11832 / MCB-3).